The chain runs to 338 residues: tRNA-cytidine(32) 2-sulfurtransferase (338 aa).

Positions 86–91 match the PP-loop motif motif; that stretch reads SGGKDS. [4Fe-4S] cluster contacts are provided by cysteine 161, cysteine 164, and cysteine 252.

It belongs to the TtcA family. In terms of assembly, homodimer. It depends on Mg(2+) as a cofactor. [4Fe-4S] cluster is required as a cofactor.

The protein localises to the cytoplasm. It carries out the reaction cytidine(32) in tRNA + S-sulfanyl-L-cysteinyl-[cysteine desulfurase] + AH2 + ATP = 2-thiocytidine(32) in tRNA + L-cysteinyl-[cysteine desulfurase] + A + AMP + diphosphate + H(+). Its pathway is tRNA modification. Catalyzes the ATP-dependent 2-thiolation of cytidine in position 32 of tRNA, to form 2-thiocytidine (s(2)C32). The sulfur atoms are provided by the cysteine/cysteine desulfurase (IscS) system. The chain is tRNA-cytidine(32) 2-sulfurtransferase from Albidiferax ferrireducens (strain ATCC BAA-621 / DSM 15236 / T118) (Rhodoferax ferrireducens).